The sequence spans 112 residues: Putative pterin-4-alpha-carbinolamine dehydratase (112 aa).

It belongs to the pterin-4-alpha-carbinolamine dehydratase family.

It catalyses the reaction (4aS,6R)-4a-hydroxy-L-erythro-5,6,7,8-tetrahydrobiopterin = (6R)-L-erythro-6,7-dihydrobiopterin + H2O. The protein is Putative pterin-4-alpha-carbinolamine dehydratase of Shewanella sp. (strain MR-4).